A 59-amino-acid polypeptide reads, in one-letter code: Small, acid-soluble spore protein H (59 aa).

Belongs to the SspH family.

Its subcellular location is the spore core. In Alkaliphilus metalliredigens (strain QYMF), this protein is Small, acid-soluble spore protein H.